Here is a 246-residue protein sequence, read N- to C-terminus: Uridylate kinase (246 aa).

An ATP-binding site is contributed by 20–23 (KISG). An involved in allosteric activation by GTP region spans residues 28-33 (GDQGYG). Gly-62 is a binding site for UMP. Residues Gly-63 and Arg-67 each contribute to the ATP site. Residues Asp-82 and 143-150 (TGNPYFTT) each bind UMP. ATP contacts are provided by Thr-170, Tyr-176, and Asp-179.

It belongs to the UMP kinase family. As to quaternary structure, homohexamer.

The protein resides in the cytoplasm. It carries out the reaction UMP + ATP = UDP + ADP. It participates in pyrimidine metabolism; CTP biosynthesis via de novo pathway; UDP from UMP (UMPK route): step 1/1. Its activity is regulated as follows. Allosterically activated by GTP. Inhibited by UTP. Functionally, catalyzes the reversible phosphorylation of UMP to UDP. This Cereibacter sphaeroides (strain ATCC 17025 / ATH 2.4.3) (Rhodobacter sphaeroides) protein is Uridylate kinase.